The sequence spans 239 residues: uncharacterized protein (239 aa).

8 helical membrane passes run 4–24, 29–49, 61–81, 84–104, 116–136, 139–159, 180–200, and 218–238; these read LIPK…LGMV, VIWH…VYPV, YQKW…ISVF, PPLI…MYFA, VAGV…GMGT, GWAW…SFYV, LLLP…AFIP, and IGIL…LFIT.

It to H.influenzae HI_1626.

The protein localises to the cell membrane. This is an uncharacterized protein from Bacillus subtilis (strain 168).